We begin with the raw amino-acid sequence, 295 residues long: Methionine aminopeptidase (295 aa).

His-62 lines the substrate pocket. Asp-82, Asp-93, and His-153 together coordinate a divalent metal cation. His-161 is a substrate binding site. A divalent metal cation is bound by residues Glu-187 and Glu-280.

As to quaternary structure, monomer. It depends on Co(2+) as a cofactor. Requires Zn(2+) as cofactor. Mn(2+) is required as a cofactor. Fe(2+) serves as cofactor.

It catalyses the reaction Release of N-terminal amino acids, preferentially methionine, from peptides and arylamides.. In terms of biological role, removes the N-terminal methionine from nascent proteins. The N-terminal methionine is often cleaved when the second residue in the primary sequence is small and uncharged (Met-Ala-, Cys, Gly, Pro, Ser, Thr, or Val). This is Methionine aminopeptidase from Pyrococcus furiosus (strain ATCC 43587 / DSM 3638 / JCM 8422 / Vc1).